The primary structure comprises 486 residues: ATP synthase subunit beta 2 (486 aa).

166–173 (GGAGVGKT) is a binding site for ATP.

This sequence belongs to the ATPase alpha/beta chains family. In terms of assembly, F-type ATPases have 2 components, CF(1) - the catalytic core - and CF(0) - the membrane proton channel. CF(1) has five subunits: alpha(3), beta(3), gamma(1), delta(1), epsilon(1). CF(0) has three main subunits: a(1), b(2) and c(9-12). The alpha and beta chains form an alternating ring which encloses part of the gamma chain. CF(1) is attached to CF(0) by a central stalk formed by the gamma and epsilon chains, while a peripheral stalk is formed by the delta and b chains.

It is found in the cell inner membrane. The enzyme catalyses ATP + H2O + 4 H(+)(in) = ADP + phosphate + 5 H(+)(out). In terms of biological role, produces ATP from ADP in the presence of a proton gradient across the membrane. The catalytic sites are hosted primarily by the beta subunits. The sequence is that of ATP synthase subunit beta 2 from Gluconobacter oxydans (strain 621H) (Gluconobacter suboxydans).